Consider the following 159-residue polypeptide: Putative ribosomal RNA large subunit methyltransferase H (159 aa).

S-adenosyl-L-methionine contacts are provided by residues L76, G108, and 127–132 (FSKMTF).

The protein belongs to the RNA methyltransferase RlmH family.

The protein resides in the cytoplasm. The catalysed reaction is pseudouridine(1915) in 23S rRNA + S-adenosyl-L-methionine = N(3)-methylpseudouridine(1915) in 23S rRNA + S-adenosyl-L-homocysteine + H(+). Functionally, specifically methylates the pseudouridine at position 1915 (m3Psi1915) in 23S rRNA. The protein is Putative ribosomal RNA large subunit methyltransferase H of Methanococcus maripaludis (strain DSM 14266 / JCM 13030 / NBRC 101832 / S2 / LL).